Reading from the N-terminus, the 96-residue chain is Co-chaperonin GroES (96 aa).

It belongs to the GroES chaperonin family. As to quaternary structure, heptamer of 7 subunits arranged in a ring. Interacts with the chaperonin GroEL.

The protein resides in the cytoplasm. Its function is as follows. Together with the chaperonin GroEL, plays an essential role in assisting protein folding. The GroEL-GroES system forms a nano-cage that allows encapsulation of the non-native substrate proteins and provides a physical environment optimized to promote and accelerate protein folding. GroES binds to the apical surface of the GroEL ring, thereby capping the opening of the GroEL channel. The sequence is that of Co-chaperonin GroES from Hydrogenovibrio crunogenus (strain DSM 25203 / XCL-2) (Thiomicrospira crunogena).